The sequence spans 448 residues: Tubulin beta chain (448 aa).

Gln11, Glu69, Ser138, Gly142, Thr143, Gly144, Asn204, and Asn226 together coordinate GTP. A Mg(2+)-binding site is contributed by Glu69. The tract at residues 425–448 is disordered; sequence YQDASISEGEEEYLEEEEPLEHEE. The span at 432 to 448 shows a compositional bias: acidic residues; it reads EGEEEYLEEEEPLEHEE.

Belongs to the tubulin family. As to quaternary structure, dimer of alpha and beta chains. A typical microtubule is a hollow water-filled tube with an outer diameter of 25 nm and an inner diameter of 15 nM. Alpha-beta heterodimers associate head-to-tail to form protofilaments running lengthwise along the microtubule wall with the beta-tubulin subunit facing the microtubule plus end conferring a structural polarity. Microtubules usually have 13 protofilaments but different protofilament numbers can be found in some organisms and specialized cells. It depends on Mg(2+) as a cofactor.

The protein resides in the cytoplasm. It localises to the cytoskeleton. Tubulin is the major constituent of microtubules, a cylinder consisting of laterally associated linear protofilaments composed of alpha- and beta-tubulin heterodimers. Microtubules grow by the addition of GTP-tubulin dimers to the microtubule end, where a stabilizing cap forms. Below the cap, tubulin dimers are in GDP-bound state, owing to GTPase activity of alpha-tubulin. The chain is Tubulin beta chain (benA56) from Aspergillus oryzae (strain ATCC 42149 / RIB 40) (Yellow koji mold).